The sequence spans 62 residues: Inner membrane protein p12 (62 aa).

The chain crosses the membrane as a helical span at residues 16–36; sequence LLIVAIVVVIMAIMLYYFWWM.

This sequence belongs to the asfivirus inner membrane protein p12 family. In terms of assembly, homomultimer; disulfide-linked. Post-translationally, not glycosylated.

It localises to the virion membrane. The polypeptide is Inner membrane protein p12 (African swine fever virus (isolate Pig/Kenya/KEN-50/1950) (ASFV)).